The primary structure comprises 300 residues: Formylmethanofuran--tetrahydromethanopterin formyltransferase-like protein (300 aa).

Belongs to the FTR family.

The protein is Formylmethanofuran--tetrahydromethanopterin formyltransferase-like protein of Methanopyrus kandleri (strain AV19 / DSM 6324 / JCM 9639 / NBRC 100938).